Consider the following 362-residue polypeptide: Ferrochelatase (362 aa).

Residues His228 and Glu309 each coordinate Fe cation.

Belongs to the ferrochelatase family.

Its subcellular location is the cytoplasm. The catalysed reaction is heme b + 2 H(+) = protoporphyrin IX + Fe(2+). It functions in the pathway porphyrin-containing compound metabolism; protoheme biosynthesis; protoheme from protoporphyrin-IX: step 1/1. Functionally, catalyzes the ferrous insertion into protoporphyrin IX. This Bordetella pertussis (strain Tohama I / ATCC BAA-589 / NCTC 13251) protein is Ferrochelatase.